Here is a 508-residue protein sequence, read N- to C-terminus: UBX domain-containing protein 4 (508 aa).

Residues 1-200 are interaction with UBQLN1; the sequence is MLWFQGAIPA…PTEDLTVRVE (200 aa). The Cytoplasmic portion of the chain corresponds to 1–413; the sequence is MLWFQGAIPA…VHSSSGDFWT (413 aa). The tract at residues 117–199 is disordered; the sequence is GEASLANGSQ…RPTEDLTVRV (83 aa). Residues 122–190 show a composition bias toward polar residues; it reads ANGSQSEGSV…QEPSGCSNQR (69 aa). The region spanning 315–393 is the UBX domain; it reads ERSTVARIQF…ELAPSASVVL (79 aa). The stretch at 414-434 is an intramembrane region; that stretch reads LLGTVLYPFLAIWRLISNFLF. Residues 435–508 are Cytoplasmic-facing; it reads SNPPPAQTSV…TWNGNSTQQM (74 aa). The span at 450-459 shows a compositional bias: polar residues; that stretch reads ETSNLASSSN. The tract at residues 450–508 is disordered; the sequence is ETSNLASSSNSEKREPVRKRVLEKRGEDFKKEGKIYRLRTQDDGEDENNTWNGNSTQQM. Residues 460–491 are compositionally biased toward basic and acidic residues; sequence SEKREPVRKRVLEKRGEDFKKEGKIYRLRTQD. A Phosphothreonine modification is found at Thr489. A compositionally biased stretch (polar residues) spans 498-508; it reads NTWNGNSTQQM.

In terms of assembly, directly interacts with VCP. Interacts with UBQLN1. Forms a complex with VCP and UBQLN1.

The protein localises to the endoplasmic reticulum membrane. The protein resides in the nucleus envelope. In terms of biological role, involved in endoplasmic reticulum-associated protein degradation (ERAD). Acts as a platform to recruit both UBQLN1 and VCP to the ER during ERAD. This is UBX domain-containing protein 4 (UBXN4) from Bos taurus (Bovine).